A 174-amino-acid polypeptide reads, in one-letter code: uncharacterized protein (174 aa).

This is an uncharacterized protein from Rickettsia conorii (strain ATCC VR-613 / Malish 7).